Reading from the N-terminus, the 58-residue chain is UPF0391 membrane protein Sden_3712 (58 aa).

2 helical membrane-spanning segments follow: residues 6 to 26 and 27 to 47; these read LTFL…IAGA and AAGI…ISLV.

Belongs to the UPF0391 family.

The protein resides in the cell membrane. The chain is UPF0391 membrane protein Sden_3712 from Shewanella denitrificans (strain OS217 / ATCC BAA-1090 / DSM 15013).